We begin with the raw amino-acid sequence, 42 residues long: Photosystem I reaction center subunit IX (42 aa).

Residues 8–28 (YLSTAPVIGVLWMTFTAGFII) form a helical membrane-spanning segment.

It belongs to the PsaJ family.

It is found in the plastid. The protein localises to the chloroplast thylakoid membrane. May help in the organization of the PsaE and PsaF subunits. The chain is Photosystem I reaction center subunit IX from Pyropia yezoensis (Susabi-nori).